Here is a 476-residue protein sequence, read N- to C-terminus: Rifampicin monooxygenase (476 aa).

FAD is bound by residues T12, E31, K32, Q98, L122, and T156. 2 residues coordinate rifampicin: R196 and R213. FAD is bound by residues D277, L290, and N291.

It belongs to the rifampicin monooxygenase family. FAD serves as cofactor.

The enzyme catalyses rifampicin + NADPH + O2 = rifampicin para-naphthoquinone carboxamide + NADP(+) + H2O + H(+). It carries out the reaction rifampicin + NADH + O2 = rifampicin para-naphthoquinone carboxamide + NAD(+) + H2O + H(+). It catalyses the reaction rifamycin SV + NADPH + O2 = rifamycin SV para-naphthoquinone carboxamide + NADP(+) + H2O. The catalysed reaction is rifamycin SV + NADH + O2 = rifamycin SV para-naphthoquinone carboxamide + NAD(+) + H2O. Its function is as follows. Monooxygenase that can modify rifampicin, thereby inactivating its antibiotic activity. Inactivates a broad range of rifamycin antibiotics. The sequence is that of Rifampicin monooxygenase from Streptomyces venezuelae (strain ATCC 10712 / CBS 650.69 / DSM 40230 / JCM 4526 / NBRC 13096 / PD 04745).